Here is a 265-residue protein sequence, read N- to C-terminus: Cytochrome c oxidase subunit 3 (265 aa).

The next 7 helical transmembrane spans lie at 16–36 (PWPISGSLGALATTVGGVMYM), 41–61 (GGATLLSLGLIFLLYTMFVWW), 84–104 (YGSILFIVSEVMFLFAFFWAS), 137–157 (TPILLSSGAAVTWAHHAILAG), 162–182 (AVYALVATVSLAIVFTGFQGM), 200–220 (FYLATGFHGFHVIIGTLFSII), and 245–265 (WHFVDVVRLFLFVSIYWWGGI).

Belongs to the cytochrome c oxidase subunit 3 family. In terms of assembly, component of the cytochrome c oxidase (complex IV, CIV), a multisubunit enzyme composed of a catalytic core of 3 subunits and several supernumerary subunits. The complex exists as a monomer or a dimer and forms supercomplexes (SCs) in the inner mitochondrial membrane with ubiquinol-cytochrome c oxidoreductase (cytochrome b-c1 complex, complex III, CIII).

The protein resides in the mitochondrion inner membrane. The enzyme catalyses 4 Fe(II)-[cytochrome c] + O2 + 8 H(+)(in) = 4 Fe(III)-[cytochrome c] + 2 H2O + 4 H(+)(out). Functionally, component of the cytochrome c oxidase, the last enzyme in the mitochondrial electron transport chain which drives oxidative phosphorylation. The respiratory chain contains 3 multisubunit complexes succinate dehydrogenase (complex II, CII), ubiquinol-cytochrome c oxidoreductase (cytochrome b-c1 complex, complex III, CIII) and cytochrome c oxidase (complex IV, CIV), that cooperate to transfer electrons derived from NADH and succinate to molecular oxygen, creating an electrochemical gradient over the inner membrane that drives transmembrane transport and the ATP synthase. Cytochrome c oxidase is the component of the respiratory chain that catalyzes the reduction of oxygen to water. Electrons originating from reduced cytochrome c in the intermembrane space (IMS) are transferred via the dinuclear copper A center (CU(A)) of subunit 2 and heme A of subunit 1 to the active site in subunit 1, a binuclear center (BNC) formed by heme A3 and copper B (CU(B)). The BNC reduces molecular oxygen to 2 water molecules using 4 electrons from cytochrome c in the IMS and 4 protons from the mitochondrial matrix. This is Cytochrome c oxidase subunit 3 (COX3) from Oenothera berteroana (Bertero's evening primrose).